Consider the following 216-residue polypeptide: DNA-directed RNA polymerase subunit alpha (216 aa).

The protein belongs to the RNA polymerase alpha chain family. In terms of assembly, in plastids the minimal PEP RNA polymerase catalytic core is composed of four subunits: alpha, beta, beta', and beta''. When a (nuclear-encoded) sigma factor is associated with the core the holoenzyme is formed, which can initiate transcription.

It localises to the plastid. Its subcellular location is the chloroplast. The enzyme catalyses RNA(n) + a ribonucleoside 5'-triphosphate = RNA(n+1) + diphosphate. Functionally, DNA-dependent RNA polymerase catalyzes the transcription of DNA into RNA using the four ribonucleoside triphosphates as substrates. This Euglena gracilis protein is DNA-directed RNA polymerase subunit alpha (rpoA).